We begin with the raw amino-acid sequence, 145 residues long: Leghemoglobin (145 aa).

In terms of domain architecture, Globin spans 3–145 (GFTEKQEALV…ELAAALKKAF (143 aa)). Residues Y26 and Y31 each carry the nitrated tyrosine modification. O2 is bound at residue H62. 3 residues coordinate heme b: K65, H93, and K96. Residue Y134 is modified to Nitrated tyrosine.

It belongs to the plant globin family. As to quaternary structure, monomer. Nitrated in effective nodules and particularly in hypoxic conditions; this mechanism may play a protective role in the symbiosis by buffering toxic peroxynitrite NO(2)(-). Nitration level decrease during nodule senescence. Root nodules.

Its subcellular location is the cytoplasm. The protein localises to the cytosol. It localises to the nucleus. Leghemoglobin that reversibly binds oxygen O(2) through a pentacoordinated heme iron. In root nodules, facilitates the diffusion of oxygen to the bacteroids while preventing the bacterial nitrogenase from being inactivated by buffering dioxygen, nitric oxide and carbon monoxide, and promoting the formation of reactive oxygen species (ROS, e.g. H(2)O(2)). This role is essential for symbiotic nitrogen fixation (SNF). This is Leghemoglobin from Psophocarpus tetragonolobus (Winged bean).